The chain runs to 320 residues: NAC domain-containing protein 18 (320 aa).

The segment at 1–22 (MESTDSSGGPPPPQPNLPPGFR) is disordered. A compositionally biased stretch (pro residues) spans 9-18 (GPPPPQPNLP). The region spanning 17–177 (LPPGFRFHPT…DWVLCRIYKK (161 aa)) is the NAC domain. The DNA-binding element occupies 118-183 (VGVKKALVFY…IYKKNNSTAS (66 aa)).

As to expression, restricted primarily to the region of the embryo including the SAM. Expressed in the outer integument, but seems not expressed in the embryo at the torpedo stage.

It localises to the nucleus. In terms of biological role, may encode a transcription factor involved in the elaboration of shoot apical meristems (SAM). Together with NAC056/NARS1, regulates embryogenesis by regulating the development and degeneration of ovule integuments, a process required for intertissue communication between the embryo and the maternal integument. The polypeptide is NAC domain-containing protein 18 (NAC018) (Arabidopsis thaliana (Mouse-ear cress)).